A 522-amino-acid chain; its full sequence is F-box only protein 7 (522 aa).

Disordered regions lie at residues Met1–Glu20 and Pro85–Val128. Residues Met1–Pro88 are ubiquitin-like. Residues Leu87 to Asn114 show a composition bias toward polar residues. The interval Asp92–Thr129 is important for interaction with PINK1. The tract at residues Thr129–Met169 is important for interaction with CDK6. The important for dimerization and interaction with PSMF1 stretch occupies residues Pro180–Leu324. Residues Val329–Leu375 enclose the F-box domain. Residues Arg381 to Leu522 are important for interaction with CDK6. Residues Arg431 and Arg451 each carry the omega-N-methylarginine modification. The segment at Asp459–Leu522 is disordered. The RFDP motif signature appears at Arg481–Pro484. The residue at position 518 (Arg518) is an Asymmetric dimethylarginine.

Part of the SCF (SKP1-CUL1-F-box) E3 ubiquitin-protein ligase complex SCF(FBXO7) formed of CUL1, SKP1, RBX1 and FBXO7. Interacts via its C-terminal proline-rich region with DLGAP5. Interacts with BIRC2. Interacts with CDK6 and promotes its interaction with D-type cyclin. Interacts (via the N-terminal Ubl domain) with PRKN. Interacts (via N-terminal region) with PINK1. Interacts with PSMF1.

It localises to the cytoplasm. It is found in the nucleus. The protein localises to the mitochondrion. The protein resides in the cytosol. It participates in protein modification; protein ubiquitination. In terms of biological role, substrate recognition component of a SCF (SKP1-CUL1-F-box protein) E3 ubiquitin-protein ligase complex which mediates the ubiquitination and subsequent proteasomal degradation of target proteins and plays a role in several biological processes such as cell cycle, cell proliferation, or maintenance of chromosome stability. Recognizes and ubiquitinates BIRC2 and the cell cycle regulator DLGAP5. Plays a role downstream of PINK1 in the clearance of damaged mitochondria via selective autophagy (mitophagy) by targeting PRKN to dysfunctional depolarized mitochondria. Promotes MFN1 ubiquitination. Mediates the ubiquitination and proteasomal degradation of UXT isoform 2, thereby impairing the NF-kappa-B signaling pathway. Inhibits NF-kappa-B pathway also by promoting the ubiquitinatioin of TRAF2. Affects the assembly state and activity of the proteasome in the cells including neurons by ubiquitinating the proteasomal subunit PSMA2 via 'Lys-63'-linked polyubiquitin chains. Promotes 'Lys-48'-linked polyubiquitination SIRT7, leading to the hydrogen peroxide-induced cell death. The sequence is that of F-box only protein 7 (Fbxo7) from Rattus norvegicus (Rat).